A 628-amino-acid polypeptide reads, in one-letter code: Translation factor GUF1, mitochondrial (628 aa).

The tr-type G domain maps to 27-209 (LPSRNFSIIA…AIISRIPPPS (183 aa)). GTP is bound by residues 36–43 (AHIDHGKS), 102–106 (DTPGH), and 156–159 (NKID).

Belongs to the TRAFAC class translation factor GTPase superfamily. Classic translation factor GTPase family. LepA subfamily.

It localises to the mitochondrion inner membrane. The catalysed reaction is GTP + H2O = GDP + phosphate + H(+). In terms of biological role, promotes mitochondrial protein synthesis. May act as a fidelity factor of the translation reaction, by catalyzing a one-codon backward translocation of tRNAs on improperly translocated ribosomes. Binds to mitochondrial ribosomes in a GTP-dependent manner. This chain is Translation factor GUF1, mitochondrial, found in Laccaria bicolor (strain S238N-H82 / ATCC MYA-4686) (Bicoloured deceiver).